A 224-amino-acid polypeptide reads, in one-letter code: Deoxyribose-phosphate aldolase (224 aa).

The Proton donor/acceptor role is filled by D92. The active-site Schiff-base intermediate with acetaldehyde is K155. The active-site Proton donor/acceptor is K184.

Belongs to the DeoC/FbaB aldolase family. DeoC type 1 subfamily.

It localises to the cytoplasm. The enzyme catalyses 2-deoxy-D-ribose 5-phosphate = D-glyceraldehyde 3-phosphate + acetaldehyde. The protein operates within carbohydrate degradation; 2-deoxy-D-ribose 1-phosphate degradation; D-glyceraldehyde 3-phosphate and acetaldehyde from 2-deoxy-alpha-D-ribose 1-phosphate: step 2/2. In terms of biological role, catalyzes a reversible aldol reaction between acetaldehyde and D-glyceraldehyde 3-phosphate to generate 2-deoxy-D-ribose 5-phosphate. This Clostridium perfringens (strain 13 / Type A) protein is Deoxyribose-phosphate aldolase.